Reading from the N-terminus, the 4563-residue chain is MDPPRPALLALLALPALLLLLLAGARAEEEMLENVSLVCPKDATRFKHLRKYTYNYEAESSSGVPGTADSRSATRINCKVELEVPQLCSFILKTSQCTLKEVYGFNPEGKALLKKTKNSEEFAAAMSRYELKLAIPEGKQVFLYPEKDEPTYILNIKRGIISALLVPPETEEAKQVLFLDTVYGNCSTHFTVKTRKGNVATEISTERDLGQCDRFKPIRTGISPLALIKGMTRPLSTLISSSQSCQYTLDAKRKHVAEAICKEQHLFLPFSYKNKYGMVAQVTQTLKLEDTPKINSRFFGEGTKKMGLAFESTKSTSPPKQAEAVLKTLQELKKLTISEQNIQRANLFNKLVTELRGLSDEAVTSLLPQLIEVSSPITLQALVQCGQPQCSTHILQWLKRVHANPLLIDVVTYLVALIPEPSAQQLREIFNMARDQRSRATLYALSHAVNNYHKTNPTGTQELLDIANYLMEQIQDDCTGDEDYTYLILRVIGNMGQTMEQLTPELKSSILKCVQSTKPSLMIQKAAIQALRKMEPKDKDQEVLLQTFLDDASPGDKRLAAYLMLMRSPSQADINKIVQILPWEQNEQVKNFVASHIANILNSEELDIQDLKKLVKEALKESQLPTVMDFRKFSRNYQLYKSVSLPSLDPASAKIEGNLIFDPNNYLPKESMLKTTLTAFGFASADLIEIGLEGKGFEPTLEALFGKQGFFPDSVNKALYWVNGQVPDGVSKVLVDHFGYTKDDKHEQDMVNGIMLSVEKLIKDLKSKEVPEARAYLRILGEELGFASLHDLQLLGKLLLMGARTLQGIPQMIGEVIRKGSKNDFFLHYIFMENAFELPTGAGLQLQISSSGVIAPGAKAGVKLEVANMQAELVAKPSVSVEFVTNMGIIIPDFARSGVQMNTNFFHESGLEAHVALKAGKLKFIIPSPKRPVKLLSGGNTLHLVSTTKTEVIPPLIENRQSWSVCKQVFPGLNYCTSGAYSNASSTDSASYYPLTGDTRLELELRPTGEIEQYSVSATYELQREDRALVDTLKFVTQAEGAKQTEATMTFKYNRQSMTLSSEVQIPDFDVDLGTILRVNDESTEGKTSYRLTLDIQNKKITEVALMGHLSCDTKEERKIKGVISIPRLQAEARSEILAHWSPAKLLLQMDSSATAYGSTVSKRVAWHYDEEKIEFEWNTGTNVDTKKMTSNFPVDLSDYPKSLHMYANRLLDHRVPQTDMTFRHVGSKLIVAMSSWLQKASGSLPYTQTLQDHLNSLKEFNLQNMGLPDFHIPENLFLKSDGRVKYTLNKNSLKIEIPLPFGGKSSRDLKMLETVRTPALHFKSVGFHLPSREFQVPTFTIPKLYQLQVPLLGVLDLSTNVYSNLYNWSASYSGGNTSTDHFSLRARYHMKADSVVDLLSYNVQGSGETTYDHKNTFTLSCDGSLRHKFLDSNIKFSHVEKLGNNPVSKGLLIFDASSSWGPQMSASVHLDSKKKQHLFVKEVKIDGQFRVSSFYAKGTYGLSCQRDPNTGRLNGESNLRFNSSYLQGTNQITGRYEDGTLSLTSTSDLQSGIIKNTASLKYENYELTLKSDTNGKYKNFATSNKMDMTFSKQNALLRSEYQADYESLRFFSLLSGSLNSHGLELNADILGTDKINSGAHKATLRIGQDGISTSATTNLKCSLLVLENELNAELGLSGASMKLTTNGRFREHNAKFSLDGKAALTELSLGSAYQAMILGVDSKNIFNFKVSQEGLKLSNDMMGSYAEMKFDHTNSLNIAGLSLDFSSKLDNIYSSDKFYKQTVNLQLQPYSLVTTLNSDLKYNALDLTNNGKLRLEPLKLHVAGNLKGAYQNNEIKHIYAISSAALSASYKADTVAKVQGVEFSHRLNTDIAGLASAIDMSTNYNSDSLHFSNVFRSVMAPFTMTIDAHTNGNGKLALWGEHTGQLYSKFLLKAEPLAFTFSHDYKGSTSHHLVSRKSISAALEHKVSALLTPAEQTGTWKLKTQFNNNEYSQDLDAYNTKDKIGVELTGRTLADLTLLDSPIKVPLLLSEPINIIDALEMRDAVEKPQEFTIVAFVKYDKNQDVHSINLPFFETLQEYFERNRQTIIVVLENVQRNLKHINIDQFVRKYRAALGKLPQQANDYLNSFNWERQVSHAKEKLTALTKKYRITENDIQIALDDAKINFNEKLSQLQTYMIQFDQYIKDSYDLHDLKIAIANIIDEIIEKLKSLDEHYHIRVNLVKTIHDLHLFIENIDFNKSGSSTASWIQNVDTKYQIRIQIQEKLQQLKRHIQNIDIQHLAGKLKQHIEAIDVRVLLDQLGTTISFERINDILEHVKHFVINLIGDFEVAEKINAFRAKVHELIERYEVDQQIQVLMDKLVELAHQYKLKETIQKLSNVLQQVKIKDYFEKLVGFIDDAVKKLNELSFKTFIEDVNKFLDMLIKKLKSFDYHQFVDETNDKIREVTQRLNGEIQALELPQKAEALKLFLEETKATVAVYLESLQDTKITLIINWLQEALSSASLAHMKAKFRETLEDTRDRMYQMDIQQELQRYLSLVGQVYSTLVTYISDWWTLAAKNLTDFAEQYSIQDWAKRMKALVEQGFTVPEIKTILGTMPAFEVSLQALQKATFQTPDFIVPLTDLRIPSVQINFKDLKNIKIPSRFSTPEFTILNTFHIPSFTIDFVEMKVKIIRTIDQMLNSELQWPVPDIYLRDLKVEDIPLARITLPDFRLPEIAIPEFIIPTLNLNDFQVPDLHIPEFQLPHISHTIEVPTFGKLYSILKIQSPLFTLDANADIGNGTTSANEAGIAASITAKGESKLEVLNFDFQANAQLSNPKINPLALKESVKFSSKYLRTEHGSEMLFFGNAIEGKSNTVASLHTEKNTLELSNGVIVKINNQLTLDSNTKYFHKLNIPKLDFSSQADLRNEIKTLLKAGHIAWTSSGKGSWKWACPRFSDEGTHESQISFTIEGPLTSFGLSNKINSKHLRVNQNLVYESGSLNFSKLEIQSQVDSQHVGHSVLTAKGMALFGEGKAEFTGRHDAHLNGKVIGTLKNSLFFSAQPFEITASTNNEGNLKVRFPLRLTGKIDFLNNYALFLSPSAQQASWQVSARFNQYKYNQNFSAGNNENIMEAHVGINGEANLDFLNIPLTIPEMRLPYTIITTPPLKDFSLWEKTGLKEFLKTTKQSFDLSVKAQYKKNKHRHSITNPLAVLCEFISQSIKSFDRHFEKNRNNALDFVTKSYNETKIKFDKYKAEKSHDELPRTFQIPGYTVPVVNVEVSPFTIEMSAFGYVFPKAVSMPSFSILGSDVRVPSYTLILPSLELPVLHVPRNLKLSLPDFKELCTISHIFIPAMGNITYDFSFKSSVITLNTNAELFNQSDIVAHLLSSSSSVIDALQYKLEGTTRLTRKRGLKLATALSLSNKFVEGSHNSTVSLTTKNMEVSVATTTKAQIPILRMNFKQELNGNTKSKPTVSSSMEFKYDFNSSMLYSTAKGAVDHKLSLESLTSYFSIESSTKGDVKGSVLSREYSGTIASEANTYLNSKSTRSSVKLQGTSKIDDIWNLEVKENFAGEATLQRIYSLWEHSTKNHLQLEGLFFTNGEHTSKATLELSPWQMSALVQVHASQPSSFHDFPDLGQEVALNANTKNQKIRWKNEVRIHSGSFQSQVELSNDQEKAHLDIAGSLEGHLRFLKNIILPVYDKSLWDFLKLDVTTSIGRRQHLRVSTAFVYTKNPNGYSFSIPVKVLADKFIIPGLKLNDLNSVLVMPTFHVPFTDLQVPSCKLDFREIQIYKKLRTSSFALNLPTLPEVKFPEVDVLTKYSQPEDSLIPFFEITVPESQLTVSQFTLPKSVSDGIAALDLNAVANKIADFELPTIIVPEQTIEIPSIKFSVPAGIVIPSFQALTARFEVDSPVYNATWSASLKNKADYVETVLDSTCSSTVQFLEYELNVLGTHKIEDGTLASKTKGTFAHRDFSAEYEEDGKYEGLQEWEGKAHLNIKSPAFTDLHLRYQKDKKGISTSAASPAVGTVGMDMDEDDDFSKWNFYYSPQSSPDKKLTIFKTELRVRESDEETQIKVNWEEEAASGLLTSLKDNVPKATGVLYDYVNKYHWEHTGLTLREVSSKLRRNLQNNAEWVYQGAIRQIDDIDVRFQKAASGTTGTYQEWKDKAQNLYQELLTQEGQASFQGLKDNVFDGLVRVTQEFHMKVKHLIDSLIDFLNFPRFQFPGKPGIYTREELCTMFIREVGTVLSQVYSKVHNGSEILFSYFQDLVITLPFELRKHKLIDVISMYRELLKDLSKEAQEVFKAIQSLKTTEVLRNLQDLLQFIFQLIEDNIKQLKEMKFTYLINYIQDEINTIFSDYIPYVFKLLKENLCLNLHKFNEFIQNELQEASQELQQIHQYIMALREEYFDPSIVGWTVKYYELEEKIVSLIKNLLVALKDFHSEYIVSASNFTSQLSSQVEQFLHRNIQEYLSILTDPDGKGKEKIAELSATAQEIIKSQAIATKKIISDYHQQFRYKLQDFSDQLSDYYEKFIAESKRLIDLSIQNYHTFLIYITELLKKLQSTTVMNPYMKLAPGELTIIL.

The signal sequence occupies residues 1-27 (MDPPRPALLALLALPALLLLLLAGARA). The segment at 32 to 126 (LENVSLVCPK…KNSEEFAAAM (95 aa)) is heparin-binding. Asparagine 34 carries N-linked (GlcNAc...) asparagine glycosylation. Disulfide bonds link cysteine 39/cysteine 88 and cysteine 78/cysteine 97. The Vitellogenin domain occupies 46 to 672 (FKHLRKYTYN…PNNYLPKESM (627 aa)). Residue asparagine 185 is glycosylated (N-linked (GlcNAc...) asparagine). Disulfide bonds link cysteine 186/cysteine 212, cysteine 245/cysteine 261, cysteine 385/cysteine 390, and cysteine 478/cysteine 513. Residues 232 to 306 (TRPLSTLISS…RFFGEGTKKM (75 aa)) form a heparin-binding region. Residues 902–959 (NTNFFHESGLEAHVALKAGKLKFIIPSPKRPVKLLSGGNTLHLVSTTKTEVIPPLIEN) are heparin-binding. An intrachain disulfide couples cysteine 966 to cysteine 976. An N-linked (GlcNAc...) asparagine glycan is attached at asparagine 983. A lipid anchor (S-palmitoyl cysteine) is attached at cysteine 1112. N-linked (GlcNAc...) asparagine glycans are attached at residues asparagine 1368, asparagine 1377, and asparagine 1523. N6-acetyllysine is present on lysine 2004. Positions 2043–2178 (RDAVEKPQEF…EKLSQLQTYM (136 aa)) are heparin-binding. N-linked (GlcNAc...) asparagine glycans are attached at residues asparagine 2239, asparagine 2560, asparagine 2779, asparagine 2982, and asparagine 3101. Positions 3161–3236 (FLKTTKQSFD…KIKFDKYKAE (76 aa)) are heparin-binding. Positions 3174–3184 (KAQYKKNKHRH) are basic (possible receptor binding region). Cysteine 3194 and cysteine 3324 are joined by a disulfide. Residue asparagine 3224 is glycosylated (N-linked (GlcNAc...) asparagine). Position 3279 is a phosphoserine (serine 3279). Residues asparagine 3336 and asparagine 3358 are each glycosylated (N-linked (GlcNAc...) asparagine). The tract at residues 3373–3393 (VIDALQYKLEGTTRLTRKRGL) is LDL receptor binding. The heparin-binding stretch occupies residues 3383-3516 (GTTRLTRKRG…REYSGTIASE (134 aa)). The segment at 3386–3394 (RLTRKRGLK) is basic (possible receptor binding region). N-linked (GlcNAc...) asparagine glycosylation is found at asparagine 3411, asparagine 3465, and asparagine 3895. Residue serine 4048 is modified to Phosphoserine; by FAM20C. Threonine 4052 carries the phosphothreonine modification. N-linked (GlcNAc...) asparagine glycans are attached at residues asparagine 4237 and asparagine 4431.

Interacts with PCSK9. Interacts with MTTP. Interacts with AUP1. Interacts with CIDEB. Palmitoylated; structural requirement for proper assembly of the hydrophobic core of the lipoprotein particle.

Its subcellular location is the cytoplasm. The protein resides in the secreted. The protein localises to the lipid droplet. Functionally, apolipoprotein B is a major protein constituent of chylomicrons (apo B-48), LDL (apo B-100) and VLDL (apo B-100). Apo B-100 functions as a recognition signal for the cellular binding and internalization of LDL particles by the apoB/E receptor. This is Apolipoprotein B-100 (APOB) from Homo sapiens (Human).